Consider the following 253-residue polypeptide: Histone-arginine methyltransferase METTL23 (253 aa).

The interval 1–23 (MDSVRPRAPWAPPPDPASLDSPT) is disordered.

Belongs to the methyltransferase superfamily. METTL23 family. As to quaternary structure, interacts with HSPA5, HSP90B1, TUBULIN, UGGT1 and UGGT2. Interacts with TET3. Interacts with STPG4. Ubiquitously expressed.

The protein resides in the nucleus. The protein localises to the cytoplasm. The enzyme catalyses L-arginyl-[protein] + 2 S-adenosyl-L-methionine = N(omega),N(omega)-dimethyl-L-arginyl-[protein] + 2 S-adenosyl-L-homocysteine + 2 H(+). Histone methyltransferase that dimethylates histone H3 at 'Arg-17', forming asymmetric dimethylarginine (H3R17me2a), leading to activate transcription via chromatin remodeling. Maternal factor involved in epigenetic chromatin reprogramming of the paternal genome in the zygote: mediates H3R17me2a, promoting histone H3.3 incorporation in the male pronucleus, leading to TET3 recruitment and subsequent DNA demethylation. This is Histone-arginine methyltransferase METTL23 from Mus musculus (Mouse).